The sequence spans 631 residues: ATP-dependent DNA helicase 2 subunit 1 (631 aa).

The Ku domain occupies 262–487 (FYLGPNLSMS…VEFFQKIIKK (226 aa)). A disordered region spans residues 550–570 (AEPHKKRAAKSTTAGASGPKM).

Belongs to the ku70 family. In terms of assembly, heterodimer of a 70 kDa and a 80 kDa subunit.

It localises to the nucleus. The protein resides in the chromosome. The enzyme catalyses ATP + H2O = ADP + phosphate + H(+). In terms of biological role, single-stranded DNA-dependent ATP-dependent helicase. Involved in non-homologous end joining (NHEJ) DNA double strand break repair. Sequence-specific DNA-binding protein that has a high affinity for a 31 bp sequence in the Yp1 gene. Site-specific DNA binding to 31 bp P element inverted repeats. The sequence is that of ATP-dependent DNA helicase 2 subunit 1 (Irbp) from Drosophila melanogaster (Fruit fly).